The chain runs to 179 residues: Alkyl hydroperoxide reductase AhpD (179 aa).

The active-site Proton donor is the C130. An intrachain disulfide couples C130 to C133. Catalysis depends on C133, which acts as the Cysteine sulfenic acid (-SOH) intermediate.

Belongs to the AhpD family. As to quaternary structure, homotrimer.

It catalyses the reaction N(6)-[(R)-dihydrolipoyl]-L-lysyl-[lipoyl-carrier protein] + a hydroperoxide = N(6)-[(R)-lipoyl]-L-lysyl-[lipoyl-carrier protein] + an alcohol + H2O. Functionally, antioxidant protein with alkyl hydroperoxidase activity. Required for the reduction of the AhpC active site cysteine residues and for the regeneration of the AhpC enzyme activity. This Rhodococcus erythropolis (strain PR4 / NBRC 100887) protein is Alkyl hydroperoxide reductase AhpD.